The following is a 432-amino-acid chain: Glutamyl-tRNA reductase (432 aa).

Substrate is bound by residues 49-52 (TCNR), Ser109, 114-116 (EGQ), and Gln120. The Nucleophile role is filled by Cys50. Position 198–203 (198–203 (GAGRMS)) interacts with NADP(+).

It belongs to the glutamyl-tRNA reductase family. In terms of assembly, homodimer.

It catalyses the reaction (S)-4-amino-5-oxopentanoate + tRNA(Glu) + NADP(+) = L-glutamyl-tRNA(Glu) + NADPH + H(+). It functions in the pathway porphyrin-containing compound metabolism; protoporphyrin-IX biosynthesis; 5-aminolevulinate from L-glutamyl-tRNA(Glu): step 1/2. Its pathway is porphyrin-containing compound metabolism; chlorophyll biosynthesis. Functionally, catalyzes the NADPH-dependent reduction of glutamyl-tRNA(Glu) to glutamate 1-semialdehyde (GSA). The protein is Glutamyl-tRNA reductase of Synechococcus sp. (strain CC9605).